Here is a 420-residue protein sequence, read N- to C-terminus: Glutamyl-tRNA reductase (420 aa).

Substrate contacts are provided by residues threonine 49–arginine 52, serine 110, glutamate 115–glutamine 117, and glutamine 121. The Nucleophile role is filled by cysteine 50. Residue glycine 190 to asparagine 195 participates in NADP(+) binding.

This sequence belongs to the glutamyl-tRNA reductase family. In terms of assembly, homodimer.

It carries out the reaction (S)-4-amino-5-oxopentanoate + tRNA(Glu) + NADP(+) = L-glutamyl-tRNA(Glu) + NADPH + H(+). The protein operates within porphyrin-containing compound metabolism; protoporphyrin-IX biosynthesis; 5-aminolevulinate from L-glutamyl-tRNA(Glu): step 1/2. Catalyzes the NADPH-dependent reduction of glutamyl-tRNA(Glu) to glutamate 1-semialdehyde (GSA). This chain is Glutamyl-tRNA reductase, found in Wigglesworthia glossinidia brevipalpis.